A 188-amino-acid chain; its full sequence is ATP synthase subunit b (188 aa).

A helical transmembrane segment spans residues 30 to 50 (IVWSLIPFLIILIVFWKLVLP).

Belongs to the ATPase B chain family. F-type ATPases have 2 components, F(1) - the catalytic core - and F(0) - the membrane proton channel. F(1) has five subunits: alpha(3), beta(3), gamma(1), delta(1), epsilon(1). F(0) has three main subunits: a(1), b(2) and c(10-14). The alpha and beta chains form an alternating ring which encloses part of the gamma chain. F(1) is attached to F(0) by a central stalk formed by the gamma and epsilon chains, while a peripheral stalk is formed by the delta and b chains.

Its subcellular location is the cell membrane. Its function is as follows. F(1)F(0) ATP synthase produces ATP from ADP in the presence of a proton or sodium gradient. F-type ATPases consist of two structural domains, F(1) containing the extramembraneous catalytic core and F(0) containing the membrane proton channel, linked together by a central stalk and a peripheral stalk. During catalysis, ATP synthesis in the catalytic domain of F(1) is coupled via a rotary mechanism of the central stalk subunits to proton translocation. Component of the F(0) channel, it forms part of the peripheral stalk, linking F(1) to F(0). In Corynebacterium glutamicum (strain R), this protein is ATP synthase subunit b.